Here is a 130-residue protein sequence, read N- to C-terminus: MSQPVQRAAARSFLQKYINKETLKYIFTTHFWGPVSNFGIPIAAIYDLKKDPTLISGPMTFALVTYSGVFMKYALSVSPKNYLLFGCHLINETAQLAQGYRFLKYTYFTTDEEKKALDKEWKEKEKTGKQ.

Helical transmembrane passes span 23–45 (LKYI…IAAI) and 55–77 (ISGP…ALSV).

This sequence belongs to the mitochondrial pyruvate carrier (MPC) (TC 2.A.105) family. The functional 150 kDa pyruvate import complex is a heteromer of MPC1 and either MPC2 or MPC3.

It is found in the mitochondrion. The protein localises to the mitochondrion inner membrane. In terms of biological role, mediates the uptake of pyruvate into mitochondria. The protein is Mitochondrial pyruvate carrier 1 of Saccharomyces cerevisiae (strain ATCC 204508 / S288c) (Baker's yeast).